The sequence spans 94 residues: Cell division topological specificity factor (94 aa).

Belongs to the MinE family.

Functionally, prevents the cell division inhibition by proteins MinC and MinD at internal division sites while permitting inhibition at polar sites. This ensures cell division at the proper site by restricting the formation of a division septum at the midpoint of the long axis of the cell. This chain is Cell division topological specificity factor, found in Clostridioides difficile (strain 630) (Peptoclostridium difficile).